Reading from the N-terminus, the 322-residue chain is Ferrochelatase (322 aa).

Positions 194 and 275 each coordinate Fe cation.

The protein belongs to the ferrochelatase family.

The protein localises to the cytoplasm. The catalysed reaction is heme b + 2 H(+) = protoporphyrin IX + Fe(2+). The protein operates within porphyrin-containing compound metabolism; protoheme biosynthesis; protoheme from protoporphyrin-IX: step 1/1. In terms of biological role, catalyzes the ferrous insertion into protoporphyrin IX. This is Ferrochelatase from Proteus mirabilis (strain HI4320).